Reading from the N-terminus, the 354-residue chain is GTPase Obg (354 aa).

The region spanning methionine 1 to leucine 159 is the Obg domain. One can recognise an OBG-type G domain in the interval alanine 160–glutamate 334. GTP is bound by residues glycine 166–serine 173, phenylalanine 191–histidine 195, aspartate 213–glycine 216, asparagine 284–aspartate 287, and serine 315–methionine 317. Residues serine 173 and threonine 193 each contribute to the Mg(2+) site.

Belongs to the TRAFAC class OBG-HflX-like GTPase superfamily. OBG GTPase family. As to quaternary structure, monomer. Mg(2+) serves as cofactor.

Its subcellular location is the cytoplasm. In terms of biological role, an essential GTPase which binds GTP, GDP and possibly (p)ppGpp with moderate affinity, with high nucleotide exchange rates and a fairly low GTP hydrolysis rate. Plays a role in control of the cell cycle, stress response, ribosome biogenesis and in those bacteria that undergo differentiation, in morphogenesis control. The protein is GTPase Obg of Nitrosospira multiformis (strain ATCC 25196 / NCIMB 11849 / C 71).